The primary structure comprises 1173 residues: PR domain zinc finger protein 10 (1173 aa).

The interval 146 to 211 (RLPPMEGADS…AEPPRPFDPN (66 aa)) is disordered. Polar residues predominate over residues 154–167 (DSSTTINSLPSPNA). The segment covering 172-202 (KEDDDDDDDDDDDEEEEDDDGEDSDLDDWEA) has biased composition (acidic residues). One can recognise an SET domain in the interval 248 to 366 (LPLVLYIDRF…PKQELKVWYA (119 aa)). An N-terminal PR domain; essential for transcriptional activator activity region spans residues 267–371 (IPKRTQFGPL…KVWYAASYAE (105 aa)). The segment at 395 to 417 (WPCYECNRRFMSSEQLQQHLNSH) adopts a C2H2-type 1 zinc-finger fold. Basic residues predominate over residues 430–447 (RGRTRTRRKFGPGRRPGR). The segment at 430-451 (RGRTRTRRKFGPGRRPGRPPKF) is disordered. 9 C2H2-type zinc fingers span residues 559–581 (FKCL…LRFH), 589–611 (LTCD…MKFH), 617–639 (YSCI…VVVH), 645–668 (FSCP…RSFH), 673–695 (YQCT…MLRH), 701–724 (FLCS…QRMH), 756–779 (FKCR…SKRH), 801–824 (YYCQ…LKNH), and 863–886 (VCCP…RKKH). The C-terminal glutamine-rich region; essential for transcriptional activator activity stretch occupies residues 926 to 1153 (QAMTELSQTL…PASNSSQTTQ (228 aa)). 2 disordered regions span residues 1014-1056 (PTSG…ANSA) and 1125-1173 (KKSS…ISKP). Low complexity predominate over residues 1150-1160 (QTTQYIITTTT). Positions 1161–1173 (NMNGSSEVHISKP) are enriched in polar residues.

This sequence belongs to the class V-like SAM-binding methyltransferase superfamily.

The protein resides in the nucleus. Its function is as follows. Transcriptional activator, essential for early embryonic development and survival of embryonic stem cells (ESCs). Supports cell growth and survival during early development by transcriptionally activating the expression of the translation initiation factor EIF3B, to sustain global translation. Activates the transcription of FLNC. The polypeptide is PR domain zinc finger protein 10 (prdm10) (Xenopus tropicalis (Western clawed frog)).